Here is a 468-residue protein sequence, read N- to C-terminus: Mitochondrial adenyl nucleotide antiporter SLC25A23 (468 aa).

The regulatory N-terminal domain stretch occupies residues 1–149 (MRGSPGDAER…DHFLLHSLEN (149 aa)). At 1 to 188 (MRGSPGDAER…EKLTGMWWKQ (188 aa)) the chain is on the mitochondrial intermembrane side. Residues 9–44 (ERRQRWGRLFEELDSNKDGRVDVHELRQGLARLGGG) form the EF-hand 1 domain. Ca(2+)-binding residues include D22, N24, D26, R28, and E33. The tract at residues 34-67 (LRQGLARLGGGNPDPGAQQGISSEGDADPDGGLD) is disordered. The span at 58 to 67 (GDADPDGGLD) shows a compositional bias: acidic residues. EF-hand domains are found at residues 77–112 (EREQRLLLMFHSLDRNQDGHIDVSEIQQSFRALGIS) and 113–148 (ISLEQAEKILHSMDRDGTMTIDWQEWRDHFLLHSLE). Ca(2+) is bound by residues D90, N92, D94, H96, and E101. Residues 150 to 159 (VEDVLYFWKH) are linker region. Residues 165–468 (IGECLTVPDE…MKQALGVTSR (304 aa)) form a C-terminal transmembrane transporter domain region. Solcar repeat units lie at residues 183–269 (GMWW…IKRA), 277–362 (LHVQ…LKNW), and 374–462 (PGIL…MKQA). A helical membrane pass occupies residues 189-206 (LVAGAVAGAVSRTGTAPL). Topologically, residues 207-243 (DRLKVFMQVHASKTNRLNILGGLRSMVLEGGIRSLWR) are mitochondrial matrix. A helical membrane pass occupies residues 244 to 263 (GNGINVLKIAPESAIKFMAY). Topologically, residues 264–286 (EQIKRAILGQQETLHVQERFVAG) are mitochondrial intermembrane. Residues 287 to 300 (SLAGATAQTIIYPM) traverse the membrane as a helical segment. The Mitochondrial matrix segment spans residues 301-336 (EVLKTRLTLRRTGQYKGLLDCARRILEREGPRAFYR). Residues 337-356 (GYLPNVLGIIPYAGIDLAVY) traverse the membrane as a helical segment. Over 357–379 (ETLKNWWLQQYSHDSADPGILVL) the chain is Mitochondrial intermembrane. The chain crosses the membrane as a helical span at residues 380-397 (LACGTISSTCGQIASYPL). The Mitochondrial matrix portion of the chain corresponds to 398–436 (ALVRTRMQAQASIEGGPQLSMLGLLRHILSQEGMRGLYR). The chain crosses the membrane as a helical span at residues 437–456 (GIAPNFMKVIPAVSISYVVY). Residues 457-468 (ENMKQALGVTSR) lie on the Mitochondrial intermembrane side of the membrane.

It belongs to the mitochondrial carrier (TC 2.A.29) family. In terms of assembly, interacts with MCU. Interacts with MICU1. In terms of tissue distribution, expressed at low levels in most tissues examined, with highest expression in brain, skeletal muscle and pancreas.

The protein localises to the mitochondrion inner membrane. It carries out the reaction Mg(2+)(out) + phosphate(in) + ATP(out) = Mg(2+)(in) + phosphate(out) + ATP(in). It catalyses the reaction ADP(out) + phosphate(in) + H(+)(out) = ADP(in) + phosphate(out) + H(+)(in). The enzyme catalyses AMP(out) + phosphate(in) = AMP(in) + phosphate(out). The catalysed reaction is phosphate(in) + ATP(out) + 2 H(+)(out) = phosphate(out) + ATP(in) + 2 H(+)(in). It carries out the reaction dADP(in) + ADP(out) = dADP(out) + ADP(in). It catalyses the reaction Mg(2+)(in) + ADP(out) + ATP(in) + H(+)(out) = Mg(2+)(out) + ADP(in) + ATP(out) + H(+)(in). The enzyme catalyses ADP(out) + diphosphate(in) = ADP(in) + diphosphate(out). The catalysed reaction is dAMP(in) + ADP(out) + H(+)(out) = dAMP(out) + ADP(in) + H(+)(in). It carries out the reaction 3'-AMP(in) + ADP(out) + H(+)(out) = 3'-AMP(out) + ADP(in) + H(+)(in). It catalyses the reaction dAMP(out) + phosphate(in) = dAMP(in) + phosphate(out). The enzyme catalyses 3'-AMP(out) + phosphate(in) = 3'-AMP(in) + phosphate(out). The catalysed reaction is dADP(out) + phosphate(in) + H(+)(out) = dADP(in) + phosphate(out) + H(+)(in). Its activity is regulated as follows. Activated by an increase in cytosolic calcium levels that induce a conformational change of the N-terminal regulatory domain, uncapping the channel and allowing transport. Inhibited by bathophenanthroline, mersalyl, p-hydroxymercuribenzoate, bromcresol purple, tannic acid, pyridoxal 5'-phosphate and p-hydroxymercuribenzoate. Electroneutral antiporter that mediates the transport of adenine nucleotides through the inner mitochondrial membrane. Originally identified as an ATP-magnesium/inorganic phosphate antiporter, it also acts as a broad specificity adenyl nucleotide antiporter. By regulating the mitochondrial matrix adenine nucleotide pool could adapt to changing cellular energetic demands and indirectly regulate adenine nucleotide-dependent metabolic pathways. Also acts as a regulator of mitochondrial calcium uptake and can probably transport trace amounts of other divalent metal cations in complex with ATP. In vitro, a low activity is also observed with guanyl and pyrimidine nucleotides. This chain is Mitochondrial adenyl nucleotide antiporter SLC25A23, found in Homo sapiens (Human).